The primary structure comprises 1690 residues: Trinucleotide repeat-containing gene 6C protein (1690 aa).

Polar residues-rich tracts occupy residues 1–12 (MATGSAQSSFPS), 19–36 (GSHGTNGALVQSPSNQSA), and 160–183 (AEPQTSTSQNVSFSVQPQNLNTDG). Disordered regions lie at residues 1 to 42 (MATG…AGGT), 158 to 202 (ESAE…AMQT), 226 to 848 (PGAN…EPVV), and 863 to 928 (CKPA…TPGK). Residues 1 to 921 (MATGSAQSSF…GNTSKKGLQK (921 aa)) form a sufficient for interaction with argonaute family proteins region. The span at 184 to 198 (PNNTNPMNSSPNPIN) shows a compositional bias: low complexity. Over residues 255 to 288 (NPATGSTNCGFSQGNGDTVNSALSAKQNGSSSAV) the composition is skewed to polar residues. Arg-313 bears the Omega-N-methylarginine mark. The span at 362 to 374 (GWDSASAASQTPA) shows a compositional bias: polar residues. Residues 384–404 (SWAKATSSGTTASEGSSDGSG) show a composition bias toward low complexity. Basic and acidic residues predominate over residues 415-426 (GTGEGRRRDKGV). Polar residues predominate over residues 444 to 459 (LSNSGWGQTPVKQNTA). Positions 464–474 (ESPRSERKNDN) are enriched in basic and acidic residues. At Ser-465 the chain carries Phosphoserine. Polar residues-rich tracts occupy residues 482 to 510 (IATQPSNSGGKTDGSIMNSTNTSSVSGWV), 519 to 530 (ANTSWGDSNNKA), 540 to 551 (SISSTAVNNAAA), 644 to 656 (GTNAKVNPGTNWG), and 663 to 678 (PQQNWAHKPQDNNVSN). Position 714 is a phosphoserine (Ser-714). Positions 754 to 771 (SSTTAPATPTTPTSSSTT) are enriched in low complexity. Thr-776 bears the Phosphothreonine mark. Residues 778 to 788 (PSHQAGTQLNR) show a composition bias toward polar residues. Positions 901–915 (SQESSSSCSSWGNTS) are enriched in low complexity. The 46-residue stretch at 928 to 973 (KQDEAWIMSRLIKQLTDMGFPREPAEEALKSNSMNLDQAMSALLEK) folds into the UBA domain. Residue Ser-1006 is modified to Phosphoserine. Residues 1156–1214 (QLQLAYQRLQIQQQMLQAQRNVSGPMRQQEQQVARTITNLQQQIQQHQRQLAQALLVKQ) adopt a coiled-coil conformation. 5 disordered regions span residues 1212-1337 (VKQP…PPGK), 1351-1380 (QNSESPASPPVAVPHSWSRAKSDSDKISNG), 1397-1421 (GLQNIDPENDPDVTPGSVPTGPTIN), 1441-1486 (IKST…PSST), and 1600-1625 (PPTSSWQSSSGGSQPRLGTSGSTHGL). Residues 1214 to 1223 (QPPPPPPPPH) are compositionally biased toward pro residues. Positions 1260–1690 (NTFAPYPLAG…PGDLLSGESI (431 aa)) are silencing domain; interaction with CNOT1 and PAN3. The span at 1272–1321 (PNMNVNSIDMSSGLSVKDPSQSQSRLPQWTHPNSMGNLSSAASPLDQNPS) shows a compositional bias: polar residues. Positions 1371-1417 (KSDSDKISNGSSISWPPEFHPGVPWKGLQNIDPENDPDVTPGSVPTG) are required for interaction with PABPC1. The interval 1371–1690 (KSDSDKISNG…PGDLLSGESI (320 aa)) is sufficient for translational repression when tethered to a target mRNA. Residues 1381-1399 (SSISWPPEFHPGVPWKGLQ) are PABPC1-interacting motif-2 (PAM2). Positions 1441 to 1457 (IKSTWSSGPASHTQASL) are enriched in polar residues. An RRM domain is found at 1565 to 1632 (AQKSLHMCVL…HGLVRSDTAH (68 aa)). An interaction with the CCR4-NOT complex region spans residues 1596 to 1690 (GQALPPTSSW…PGDLLSGESI (95 aa)). Low complexity predominate over residues 1603–1613 (SSWQSSSGGSQ).

Belongs to the GW182 family. In terms of assembly, interacts with one or more of the argonaute family proteins AGO1, AGO2, AGO3 and AGO4. Interacts with CNOT1; the interaction mediates the association with the CCR4-NOT complex. Interacts with PAN3; the interaction mediates the association with the PAN complex.

Plays a role in RNA-mediated gene silencing by micro-RNAs (miRNAs). Required for miRNA-dependent translational repression of complementary mRNAs by argonaute family proteins As scaffoldng protein associates with argonaute proteins bound to partially complementary mRNAs and simultaneously can recruit CCR4-NOT and PAN deadenylase complexes. This chain is Trinucleotide repeat-containing gene 6C protein (Tnrc6c), found in Mus musculus (Mouse).